The primary structure comprises 388 residues: Succinate--CoA ligase [ADP-forming] subunit beta (388 aa).

Residues K9–H244 enclose the ATP-grasp domain. ATP-binding positions include K46, G53 to G55, E99, T102, and E107. Positions 199 and 213 each coordinate Mg(2+). Residues N264 and G321–V323 contribute to the substrate site.

This sequence belongs to the succinate/malate CoA ligase beta subunit family. In terms of assembly, heterotetramer of two alpha and two beta subunits. Mg(2+) serves as cofactor.

The catalysed reaction is succinate + ATP + CoA = succinyl-CoA + ADP + phosphate. The enzyme catalyses GTP + succinate + CoA = succinyl-CoA + GDP + phosphate. The protein operates within carbohydrate metabolism; tricarboxylic acid cycle; succinate from succinyl-CoA (ligase route): step 1/1. Succinyl-CoA synthetase functions in the citric acid cycle (TCA), coupling the hydrolysis of succinyl-CoA to the synthesis of either ATP or GTP and thus represents the only step of substrate-level phosphorylation in the TCA. The beta subunit provides nucleotide specificity of the enzyme and binds the substrate succinate, while the binding sites for coenzyme A and phosphate are found in the alpha subunit. This is Succinate--CoA ligase [ADP-forming] subunit beta from Shewanella oneidensis (strain ATCC 700550 / JCM 31522 / CIP 106686 / LMG 19005 / NCIMB 14063 / MR-1).